The chain runs to 223 residues: Cytotoxic T-lymphocyte protein 4 (223 aa).

An N-terminal signal peptide occupies residues 1–35 (MAGFGFRRHGVQPDLASRTWPCTALFSLLFIPVFS). Residues 36-161 (KGMHAAQPAV…IDPEPCPDSD (126 aa)) are Extracellular-facing. In terms of domain architecture, Ig-like V-type spans 39 to 140 (HAAQPAVVLA…VELMYPPPYY (102 aa)). The homodimerization stretch occupies residues 46 to 50 (VLASS). Cystine bridges form between Cys58-Cys129 and Cys85-Cys103. Residue Asn113 is glycosylated (N-linked (GlcNAc...) asparagine). The tract at residues 134–139 (MYPPPY) is important for interaction with CD80 and CD86. The N-linked (GlcNAc...) asparagine glycan is linked to Asn145. The interval 150–155 (YVIDPE) is homodimerization. The helical transmembrane segment at 162-182 (FLLWILAAVSSGLFFYSFLIT) threads the bilayer. Residues 183 to 223 (AVSLSKMLKKRSPLTTGVYVKMPPTGPECEKQFQPYFIPIN) are Cytoplasmic-facing. Tyr201 carries the phosphotyrosine; by TXK and JAK2 modification.

Homodimer; disulfide-linked. Binds to CD80/B7-1 and CD86/B7.2. Interacts with ICOSLG. In terms of processing, N-glycosylation is important for dimerization. Phosphorylation at Tyr-201 prevents binding to the AP-2 adapter complex, blocks endocytosis, and leads to retention of CTLA4 on the cell surface.

It localises to the cell membrane. Its function is as follows. Inhibitory receptor acting as a major negative regulator of T-cell responses. The affinity of CTLA4 for its natural B7 family ligands, CD80 and CD86, is considerably stronger than the affinity of their cognate stimulatory coreceptor CD28. This is Cytotoxic T-lymphocyte protein 4 (CTLA4) from Canis lupus familiaris (Dog).